The following is a 377-amino-acid chain: N-acetyldiaminopimelate deacetylase (377 aa).

Asp-70 is an active-site residue. The Proton acceptor role is filled by Glu-129.

The protein belongs to the peptidase M20A family. N-acetyldiaminopimelate deacetylase subfamily.

The catalysed reaction is N-acetyl-(2S,6S)-2,6-diaminopimelate + H2O = (2S,6S)-2,6-diaminopimelate + acetate. It functions in the pathway amino-acid biosynthesis; L-lysine biosynthesis via DAP pathway; LL-2,6-diaminopimelate from (S)-tetrahydrodipicolinate (acetylase route): step 3/3. Catalyzes the conversion of N-acetyl-diaminopimelate to diaminopimelate and acetate. This chain is N-acetyldiaminopimelate deacetylase, found in Streptococcus thermophilus (strain ATCC BAA-491 / LMD-9).